The primary structure comprises 275 residues: AA9 family lytic polysaccharide monooxygenase AA9-X282 (275 aa).

An N-terminal signal peptide occupies residues 1–17 (MFTKLIIAASLAASVAA). Cu(2+) is bound at residue His-18. Thr-20 bears the Phosphothreonine mark. Phosphoserine is present on residues Ser-43 and Ser-49. Thr-50 carries the phosphothreonine modification. Ser-58 is modified (phosphoserine). Cys-66 and Cys-185 are joined by a disulfide. Cu(2+) is bound at residue His-96. Phosphoserine is present on Ser-130. O2 is bound by residues His-171 and Gln-180. Residue Tyr-182 coordinates Cu(2+). Residues 236 to 265 (TSPAVANTPYPTTATWNTALQPSTVPTAVP) form an X282 extension region. Residues 268-275 (GTPGIGKA) carry the 9res motif motif.

Belongs to the polysaccharide monooxygenase AA9 family. The cofactor is Cu(2+).

It is found in the secreted. The enzyme catalyses [(1-&gt;4)-beta-D-glucosyl]n+m + reduced acceptor + O2 = 4-dehydro-beta-D-glucosyl-[(1-&gt;4)-beta-D-glucosyl]n-1 + [(1-&gt;4)-beta-D-glucosyl]m + acceptor + H2O.. Functionally, lytic polysaccharide monooxygenase (LPMO) that depolymerizes crystalline and amorphous polysaccharides via the oxidation of scissile alpha- or beta-(1-4)-glycosidic bonds, yielding C1 oxidation products. Catalysis by LPMOs requires the reduction of the active-site copper from Cu(II) to Cu(I) by a reducing agent and H(2)O(2) or O(2) as a cosubstrate. Shows only weak binding properties to cellulose, and low cellulolytic oxidative activity which questions the involvement of X282 extension-containing AA9 proteins in the degradation of plant cell wall and opens new avenues as to the divergence of function of some AA9 members. The protein is AA9 family lytic polysaccharide monooxygenase AA9-X282 of Trametes coccinea (strain BRFM310) (Pycnoporus coccineus).